Reading from the N-terminus, the 175-residue chain is Endoribonuclease YbeY (175 aa).

The Zn(2+) site is built by histidine 121, histidine 125, and histidine 131. A disordered region spans residues proline 154 to proline 175. Residues proline 159–proline 175 show a composition bias toward polar residues.

This sequence belongs to the endoribonuclease YbeY family. Requires Zn(2+) as cofactor.

It localises to the cytoplasm. In terms of biological role, single strand-specific metallo-endoribonuclease involved in late-stage 70S ribosome quality control and in maturation of the 3' terminus of the 16S rRNA. The chain is Endoribonuclease YbeY from Alcanivorax borkumensis (strain ATCC 700651 / DSM 11573 / NCIMB 13689 / SK2).